The sequence spans 230 residues: Large ribosomal subunit protein uL1 (230 aa).

It belongs to the universal ribosomal protein uL1 family. Part of the 50S ribosomal subunit.

In terms of biological role, binds directly to 23S rRNA. The L1 stalk is quite mobile in the ribosome, and is involved in E site tRNA release. Its function is as follows. Protein L1 is also a translational repressor protein, it controls the translation of the L11 operon by binding to its mRNA. The polypeptide is Large ribosomal subunit protein uL1 (Acholeplasma laidlawii (strain PG-8A)).